A 64-amino-acid polypeptide reads, in one-letter code: Small ribosomal subunit protein eS17 (64 aa).

This sequence belongs to the eukaryotic ribosomal protein eS17 family.

This Methanocorpusculum labreanum (strain ATCC 43576 / DSM 4855 / Z) protein is Small ribosomal subunit protein eS17.